We begin with the raw amino-acid sequence, 467 residues long: Repressible acid phosphatase (467 aa).

Positions 1 to 17 are cleaved as a signal peptide; the sequence is MFKSVVYSILAASLANA. H75 (nucleophile) is an active-site residue. N-linked (GlcNAc...) asparagine glycosylation is found at N97, N103, N162, N192, N250, and N315. Residue D338 is the Proton donor of the active site. 6 N-linked (GlcNAc...) asparagine glycosylation sites follow: N356, N390, N439, N445, N456, and N461.

Belongs to the histidine acid phosphatase family. Glycosylated during secretion across the membrane.

The protein localises to the secreted. It catalyses the reaction a phosphate monoester + H2O = an alcohol + phosphate. Its function is as follows. Partially mediates extracellular nucleotide derived phosphate hydrolysis along with NPP1 and NPP2. This is Repressible acid phosphatase (PHO5) from Saccharomyces cerevisiae (strain ATCC 204508 / S288c) (Baker's yeast).